Reading from the N-terminus, the 1074-residue chain is Phospholipase D1 (1074 aa).

One can recognise a PX domain in the interval 81–212 (IKAQVLEVER…TEFLDVSQLS (132 aa)). Positions 219–328 (PKGLEGMIMK…WGGAIEEFIR (110 aa)) constitute a PH domain. Residues Cys-240 and Cys-241 are each lipidated (S-palmitoyl cysteine). The PLD phosphodiesterase 1 domain maps to 459-486 (YLWAHHEKLVIIDQSVAFVGGIDLAYGR). The tract at residues 463 to 928 (HHEKLVIIDQ…MLGKRDSEMA (466 aa)) is catalytic. Ser-499, Ser-561, and Ser-629 each carry phosphoserine. Residues 891-918 (ELIYVHSKLLIADDNTVIIGSANINDRS) enclose the PLD phosphodiesterase 2 domain.

It belongs to the phospholipase D family. Interacts with PIP5K1B. In terms of tissue distribution, expressed in kidney, lung, and at a much lower levels, in brain, liver, heart, testis and spleen.

It localises to the cytoplasm. It is found in the perinuclear region. Its subcellular location is the endoplasmic reticulum membrane. The protein localises to the golgi apparatus membrane. The protein resides in the late endosome membrane. It carries out the reaction a 1,2-diacyl-sn-glycero-3-phosphocholine + H2O = a 1,2-diacyl-sn-glycero-3-phosphate + choline + H(+). The catalysed reaction is ethanol + a 1,2-diacyl-sn-glycero-3-phosphocholine = 1,2-diacyl-sn-glycero-3-phosphoethanol + choline. The enzyme catalyses 1,2-dihexadecanoyl-sn-glycero-3-phosphocholine + H2O = 1,2-dihexadecanoyl-sn-glycero-3-phosphate + choline + H(+). With respect to regulation, stimulated by phosphatidylinositol 4,5-bisphosphate and phosphatidylinositol 3,4,5-trisphosphate, activated by the phosphokinase C-alpha, by the ADP-ribosylation factor-1 (ARF-1), and to a lesser extent by GTP-binding proteins: RHO A, RAC-1 and CDC42. Inhibited by oleate. In terms of biological role, function as phospholipase selectivefor phosphatidylcholine. Implicated as a critical step in numerous cellular pathways, including signal transduction, membrane trafficking, and the regulation of mitosis. May be involved in the regulation of perinuclear intravesicular membrane traffic. This is Phospholipase D1 from Mus musculus (Mouse).